A 1690-amino-acid chain; its full sequence is Collagen alpha-4(IV) chain (1690 aa).

An N-terminal signal peptide occupies residues Met-1 to Gly-38. Positions Ser-39–Arg-64 are 7S domain. Disordered stretches follow at residues Lys-61 to Gly-173 and Gly-187 to Leu-258. Positions Gly-65 to Gly-1459 are triple-helical region. The span at Pro-66–Pro-75 shows a compositional bias: pro residues. The span at Ile-76 to Ser-88 shows a compositional bias: low complexity. The short motif at Arg-94–Asp-96 is the Cell attachment site element. Asn-142 carries an N-linked (GlcNAc...) asparagine glycan. A Cell attachment site motif is present at residues Arg-145–Asp-147. The span at Gly-149–Gly-164 shows a compositional bias: gly residues. Positions Arg-189–Asp-191 match the Cell attachment site motif. Residues Gly-199 to Gly-208 are compositionally biased toward gly residues. The short motif at Arg-310–Asp-312 is the Cell attachment site element. 3 disordered regions span residues Pro-369–Pro-390, Gly-405–Gly-451, and Gly-469–Gly-1457. A compositionally biased stretch (low complexity) spans Phe-412–Lys-434. 2 stretches are compositionally biased toward pro residues: residues Pro-498–Leu-507 and Pro-529–Leu-540. Basic and acidic residues predominate over residues His-586–Ala-607. A compositionally biased stretch (low complexity) spans Pro-644 to Pro-655. The N-linked (GlcNAc...) asparagine glycan is linked to Asn-669. Positions Phe-681–Phe-690 are enriched in pro residues. 2 short sequence motifs (cell attachment site) span residues Arg-724–Asp-726 and Arg-785–Asp-787. Residues Gly-849 to Gly-858 are compositionally biased toward gly residues. Low complexity-rich tracts occupy residues Ala-866 to Ala-880 and Pro-907 to Pro-917. Residues Arg-989–Asp-991 carry the Cell attachment site motif. Positions Pro-1023–Pro-1032 are enriched in pro residues. Over residues Pro-1108 to Pro-1117 the composition is skewed to low complexity. Residues Arg-1119 to Cys-1131 are compositionally biased toward pro residues. The short motif at Arg-1212–Asp-1214 is the Cell attachment site element. Composition is skewed to pro residues over residues Ile-1220–Pro-1243, Asp-1256–Leu-1280, Pro-1297–Pro-1309, Phe-1338–Arg-1353, and Gly-1443–Asp-1452. The Collagen IV NC1 domain maps to Gly-1465 to Ser-1690. Cystine bridges form between Cys-1480–Cys-1569, Cys-1513–Cys-1566, Cys-1525–Cys-1531, Cys-1588–Cys-1686, Cys-1622–Cys-1683, and Cys-1634–Cys-1641.

Belongs to the type IV collagen family. There are six type IV collagen isoforms, alpha 1(IV)-alpha 6(IV), each of which can form a triple helix structure with 2 other chains to generate type IV collagen network. The alpha 3(IV) chain forms a triple helical protomer with alpha 4(IV) and alpha 5(IV); this triple helical structure dimerizes through NC1-NC1 domain interactions such that the alpha 3(IV), alpha 4(IV) and alpha 5(IV) chains of one protomer connect with the alpha 5(IV), alpha 4(IV) and alpha 3(IV) chains of the opposite protomer, respectively. Associates with LAMB2 at the neuromuscular junction and in GBM. Prolines at the third position of the tripeptide repeating unit (G-X-Y) are hydroxylated in some or all of the chains. Post-translationally, type IV collagens contain numerous cysteine residues which are involved in inter- and intramolecular disulfide bonding. 12 of these, located in the NC1 domain, are conserved in all known type IV collagens. In terms of processing, the trimeric structure of the NC1 domains is stabilized by covalent bonds between Lys and Met residues. As to expression, expressed in Bruch's membrane, outer plexiform layer, inner nuclear layer, inner plexiform layer, ganglion cell layer, inner limiting membrane and around the blood vessels of the retina (at protein level). Alpha 3 and alpha 4 type IV collagens are colocalized and present in kidney, eye, basement membranes of lens capsule, cochlea, lung, skeletal muscle, aorta, synaptic fibers, fetal kidney and fetal lung. PubMed:8083201 reports similar levels of expression of alpha 3 and alpha 4 type IV collagens in kidney, but PubMed:7523402 reports that in kidney levels of alpha 3 type IV collagen are significantly lower than those of alpha 4 type IV collagen. Highest levels of expression of alpha 4 type IV collagen are detected in kidney, calvaria, neuroretina and cardiac muscle. Lower levels of expression are observed in brain, lung and thymus, and no expression is detected in choroid plexus, liver, adrenal, pancreas, ileum or skin.

Its subcellular location is the secreted. The protein resides in the extracellular space. It localises to the extracellular matrix. It is found in the basement membrane. Functionally, type IV collagen is the major structural component of glomerular basement membranes (GBM), forming a 'chicken-wire' meshwork together with laminins, proteoglycans and entactin/nidogen. The protein is Collagen alpha-4(IV) chain (COL4A4) of Homo sapiens (Human).